A 379-amino-acid polypeptide reads, in one-letter code: Cytochrome b (379 aa).

4 helical membrane passes run 33-53 (FGSLLGLCLISQILTGLFLAM), 77-98 (WLIRNLHANGASFFFICLYLHI), 113-133 (WNIGVVLFLLVMMTAFVGYVL), and 178-198 (FFAFHFLFPFVVAGATMIHLL). Residues His83 and His97 each coordinate heme b. Positions 182 and 196 each coordinate heme b. His201 serves as a coordination point for a ubiquinone. Helical transmembrane passes span 226-246 (YKDLLGFIIMLTALTMLALFY), 288-308 (LGGVLALLSSILVLMVVPILH), 320-340 (ASQLLFWILVADMLVLTWIGG), and 347-367 (YIIIGQVASVLYFSLFLVLNP).

Belongs to the cytochrome b family. The cytochrome bc1 complex contains 3 respiratory subunits (MT-CYB, CYC1 and UQCRFS1), 2 core proteins (UQCRC1 and UQCRC2) and probably 6 low-molecular weight proteins. Requires heme b as cofactor.

It localises to the mitochondrion inner membrane. Functionally, component of the ubiquinol-cytochrome c reductase complex (complex III or cytochrome b-c1 complex) that is part of the mitochondrial respiratory chain. The b-c1 complex mediates electron transfer from ubiquinol to cytochrome c. Contributes to the generation of a proton gradient across the mitochondrial membrane that is then used for ATP synthesis. In Anguilla reinhardtii (Speckled longfin eel), this protein is Cytochrome b (mt-cyb).